The primary structure comprises 405 residues: Cystathionine gamma-lyase (405 aa).

Residues Arg-62, Tyr-114, and Arg-119 each contribute to the substrate site. The residue at position 212 (Lys-212) is an N6-(pyridoxal phosphate)lysine. Glu-339 lines the substrate pocket.

Belongs to the trans-sulfuration enzymes family. In terms of assembly, homotetramer. Interacts with CALM in a calcium-dependent manner. Pyridoxal 5'-phosphate serves as cofactor.

Its subcellular location is the cytoplasm. It catalyses the reaction L,L-cystathionine + H2O = 2-oxobutanoate + L-cysteine + NH4(+). The enzyme catalyses L-cysteine + H2O = hydrogen sulfide + pyruvate + NH4(+) + H(+). The catalysed reaction is L-homocysteine + H2O = 2-oxobutanoate + hydrogen sulfide + NH4(+) + H(+). It carries out the reaction L-homoserine = 2-oxobutanoate + NH4(+). It catalyses the reaction L-selenocystathionine + H2O = L-selenocysteine + 2-oxobutanoate + NH4(+). Its pathway is amino-acid biosynthesis; L-cysteine biosynthesis; L-cysteine from L-homocysteine and L-serine: step 2/2. Catalyzes the last step in the trans-sulfuration pathway from L-methionine to L-cysteine in a pyridoxal-5'-phosphate (PLP)-dependent manner, which consists on cleaving the L,L-cystathionine molecule into L-cysteine, ammonia and 2-oxobutanoate. Part of the L-cysteine derived from the trans-sulfuration pathway is utilized for biosynthesis of the ubiquitous antioxidant glutathione. Besides its role in the conversion of L-cystathionine into L-cysteine, it utilizes L-cysteine and L-homocysteine as substrates (at much lower rates than L,L-cystathionine) to produce hydrogen sulfide (H2S). In vitro, it converts two L-cysteine molecules into lanthionine and H2S, and two L-homocysteine molecules to homolanthionine and H2S, which can be particularly relevant under conditions of severe hyperhomocysteinemia. Lanthionine and homolanthionine are structural homologs of L,L-cystathionine that differ by the absence or presence of an extra methylene group, respectively. Acts as a cysteine-protein sulfhydrase by mediating sulfhydration of target proteins: sulfhydration consists of converting -SH groups into -SSH on specific cysteine residues of target proteins such as GAPDH, PTPN1 and NF-kappa-B subunit RELA, thereby regulating their function. By generating the gasotransmitter H2S, it participates in a number of physiological processes such as vasodilation, bone protection, and inflammation. Plays an essential role in myogenesis by contributing to the biogenesis of H2S in skeletal muscle tissue. Can also accept homoserine as substrate. Catalyzes the elimination of selenocystathionine (which can be derived from the diet) to yield selenocysteine, ammonia and 2-oxobutanoate. In Macaca fascicularis (Crab-eating macaque), this protein is Cystathionine gamma-lyase (CTH).